We begin with the raw amino-acid sequence, 102 residues long: EPIDERMAL PATTERNING FACTOR-like protein 9 (102 aa).

An N-terminal signal peptide occupies residues 1–31 (MKHEMMNIKPRCITIFFLLFALLLGNYVVQA). Intrachain disulfides connect Cys65/Cys98, Cys70/Cys77, and Cys73/Cys100.

This sequence belongs to the plant cysteine rich small secretory peptide family. Epidermal patterning factor subfamily. In terms of assembly, interacts with ERECTA and TMM. In terms of tissue distribution, expressed in immature organs, including leaves, stems and flower buds, but not in roots, shoot apical meristem and petals. Detected in the mesophyll tissues but not in the epidermal tissues where stomata develop.

The protein localises to the secreted. The protein resides in the extracellular space. It localises to the apoplast. In terms of biological role, positively regulates stomatal density and patterning. Acts by competing with EPF2 (AC Q8LC53) for the same receptors, ERECTA (AC Q42371) and TMM (AC Q9SSD1). Not cleaved by the protease CRSP (AC Q9LNU1). This chain is EPIDERMAL PATTERNING FACTOR-like protein 9, found in Arabidopsis thaliana (Mouse-ear cress).